The following is a 177-amino-acid chain: Interleukin-1 receptor antagonist protein (177 aa).

An N-terminal signal peptide occupies residues 1–25 (MEVSRYLCSYLISFLLFLFHSETAC). An intrachain disulfide couples Cys-91 to Cys-141. N-linked (GlcNAc...) asparagine glycosylation occurs at Asn-109.

This sequence belongs to the IL-1 family.

It is found in the secreted. In terms of biological role, anti-inflammatory antagonist of interleukin-1 family of proinflammatory cytokines such as interleukin-1beta/IL1B and interleukin-1alpha/IL1A. Protects from immune dysregulation and uncontrolled systemic inflammation triggered by IL1 for a range of innate stimulatory agents such as pathogens. This chain is Interleukin-1 receptor antagonist protein (IL1RN), found in Sus scrofa (Pig).